The primary structure comprises 152 residues: MEQIDRTLATEKNIALVAHDHCKSSLLEWVKNNSEQLSHHKLFATGTTGNLVNHHTGLEVTQMLSGPMGGDQQIGAMIAEKKIDILIFFWDPLNAVPHDPDVKALLRLATVWNIPVATNRATANFLISSPLFSQESKIKIPDYEGYLKERLK.

Residues 6 to 152 (RTLATEKNIA…YEGYLKERLK (147 aa)) form the MGS-like domain. Substrate is bound by residues His19, Lys23, 45 to 48 (TGTT), and 65 to 66 (SG). Catalysis depends on Asp71, which acts as the Proton donor/acceptor. His98 is a substrate binding site.

This sequence belongs to the methylglyoxal synthase family.

It carries out the reaction dihydroxyacetone phosphate = methylglyoxal + phosphate. Functionally, catalyzes the formation of methylglyoxal from dihydroxyacetone phosphate. This chain is Methylglyoxal synthase, found in Proteus mirabilis (strain HI4320).